We begin with the raw amino-acid sequence, 188 residues long: Crossover junction endodeoxyribonuclease RuvC (188 aa).

Residues aspartate 7, glutamate 68, and aspartate 141 contribute to the active site. Mg(2+) contacts are provided by aspartate 7, glutamate 68, and aspartate 141.

This sequence belongs to the RuvC family. As to quaternary structure, homodimer which binds Holliday junction (HJ) DNA. The HJ becomes 2-fold symmetrical on binding to RuvC with unstacked arms; it has a different conformation from HJ DNA in complex with RuvA. In the full resolvosome a probable DNA-RuvA(4)-RuvB(12)-RuvC(2) complex forms which resolves the HJ. It depends on Mg(2+) as a cofactor.

Its subcellular location is the cytoplasm. It catalyses the reaction Endonucleolytic cleavage at a junction such as a reciprocal single-stranded crossover between two homologous DNA duplexes (Holliday junction).. The RuvA-RuvB-RuvC complex processes Holliday junction (HJ) DNA during genetic recombination and DNA repair. Endonuclease that resolves HJ intermediates. Cleaves cruciform DNA by making single-stranded nicks across the HJ at symmetrical positions within the homologous arms, yielding a 5'-phosphate and a 3'-hydroxyl group; requires a central core of homology in the junction. The consensus cleavage sequence is 5'-(A/T)TT(C/G)-3'. Cleavage occurs on the 3'-side of the TT dinucleotide at the point of strand exchange. HJ branch migration catalyzed by RuvA-RuvB allows RuvC to scan DNA until it finds its consensus sequence, where it cleaves and resolves the cruciform DNA. The protein is Crossover junction endodeoxyribonuclease RuvC of Mycobacterium leprae (strain TN).